A 906-amino-acid chain; its full sequence is Protein kintoun (906 aa).

Phosphoserine is present on serine 376. Disordered regions lie at residues 614-691 and 793-906; these read QQQK…RKQR and RKKN…DEDM. Residues 618–631 are compositionally biased toward basic residues; it reads KLNKKQRKRNKKQR. Basic and acidic residues predominate over residues 639 to 655; that stretch reads EELKAAQEELQLQHEKQ. Residues 793–808 show a composition bias toward basic residues; that stretch reads RKKNQKRRDCKLRAQQ. Phosphoserine is present on serine 812. Residues 837–850 show a composition bias toward polar residues; sequence ANAQYFKQPNNNNG. Composition is skewed to basic and acidic residues over residues 851–865 and 875–887; these read HDQD…HDSG and NNEE…EADA. A compositionally biased stretch (acidic residues) spans 894–906; it reads EMDDDDEDEDEDM.

Belongs to the PIH1 family. Kintoun subfamily. As to quaternary structure, interacts with Pp1alpha-96A, Pp1-87B, Pp1-13C and flw.

Its subcellular location is the cytoplasm. Its function is as follows. Required for cytoplasmic pre-assembly of axonemal dyneins, thereby playing a central role in motility in cilia and flagella. Involved in pre-assembly of dynein arm complexes in the cytoplasm before intraflagellar transport loads them for the ciliary compartment. The protein is Protein kintoun of Drosophila virilis (Fruit fly).